Here is a 407-residue protein sequence, read N- to C-terminus: MTPEKTKEVFQMFKGAPTRRKSENAHSHRVVLNQLQNHPPRNATQSPQRQPRTSESSMDFPRSALRRNSTDTHVFANRTHNHRDINVPACSSEEDRVSTARRNSLFVKRGSVTMEPIKKVDLEEVYTVNKQLGTGRFGFIKLAEHKQSKQRIAIKFFPRPQTKQADFVREYNYSFFLSPHQNIIDTYEGMFQSSDDTAYFFVQEFCPRASLREAVEATNQAGIGEANTKKVFAAVLSAIEFMHDENLVHRNLKAENILIFDANDYSKVKVTDFGLTRKVDTTVKYLEYVNNYHAAELCDTVVNEKLVVNKSTDIWALGIIFFYCMKGKFPWQKASIMCKPYWEWEQWLKRKNPALPKKFNPFSEKALKLFKKSLTPRFKDRWTAKDMRKCLAKEKLLKSVKVAVPYY.

A compositionally biased stretch (polar residues) spans 33 to 57; it reads NQLQNHPPRNATQSPQRQPRTSESS. Residues 33–68 form a disordered region; it reads NQLQNHPPRNATQSPQRQPRTSESSMDFPRSALRRN. A Protein kinase domain is found at 126–397; it reads YTVNKQLGTG…RKCLAKEKLL (272 aa). ATP contacts are provided by residues 132–140 and Lys155; that span reads LGTGRFGFI. Residue Asn251 is the Proton acceptor of the active site.

It belongs to the protein kinase superfamily. Ser/Thr protein kinase family.

The catalysed reaction is L-seryl-[protein] + ATP = O-phospho-L-seryl-[protein] + ADP + H(+). The enzyme catalyses L-threonyl-[protein] + ATP = O-phospho-L-threonyl-[protein] + ADP + H(+). This Caenorhabditis elegans protein is Putative serine/threonine-protein kinase C01C4.3.